A 164-amino-acid polypeptide reads, in one-letter code: Large ribosomal subunit protein uL10 (164 aa).

Belongs to the universal ribosomal protein uL10 family. As to quaternary structure, part of the ribosomal stalk of the 50S ribosomal subunit. The N-terminus interacts with L11 and the large rRNA to form the base of the stalk. The C-terminus forms an elongated spine to which L12 dimers bind in a sequential fashion forming a multimeric L10(L12)X complex.

Functionally, forms part of the ribosomal stalk, playing a central role in the interaction of the ribosome with GTP-bound translation factors. This is Large ribosomal subunit protein uL10 from Pseudoalteromonas translucida (strain TAC 125).